The chain runs to 83 residues: Cytochrome b559 subunit alpha (83 aa).

The helical transmembrane segment at 21-35 threads the bilayer; it reads VIHSITIPSLFIAGW. Position 23 (His23) interacts with heme.

The protein belongs to the PsbE/PsbF family. As to quaternary structure, heterodimer of an alpha subunit and a beta subunit. PSII is composed of 1 copy each of membrane proteins PsbA, PsbB, PsbC, PsbD, PsbE, PsbF, PsbH, PsbI, PsbJ, PsbK, PsbL, PsbM, PsbT, PsbX, PsbY, PsbZ, Psb30/Ycf12, at least 3 peripheral proteins of the oxygen-evolving complex and a large number of cofactors. It forms dimeric complexes. Heme b serves as cofactor.

It localises to the plastid. The protein resides in the chloroplast thylakoid membrane. Functionally, this b-type cytochrome is tightly associated with the reaction center of photosystem II (PSII). PSII is a light-driven water:plastoquinone oxidoreductase that uses light energy to abstract electrons from H(2)O, generating O(2) and a proton gradient subsequently used for ATP formation. It consists of a core antenna complex that captures photons, and an electron transfer chain that converts photonic excitation into a charge separation. The polypeptide is Cytochrome b559 subunit alpha (Acorus calamus (Sweet flag)).